Consider the following 270-residue polypeptide: MLDIIILVVIGGAFGAMTREFIMLMVPPLTDGFPLDILVANVVACFLLGTVTALYARKIHSRDVHTIIGTGMMGGVSTFSSFAYGSVVLASASVSAFLIAAAYVTVSVVAGYVAVLAGMKFGEKSADILHRYPPMASIIDSGLVTVESRHSVAETIERVAAKAKSMGMNVFTRVDHGAGAKEAGLGLPPTELIIFGNPQNGTVLMQDKRTIGLDLPIRALAWEDGSGKVWLTVNDPAWLAQRHSLGLSSDVAIKAMVTGTGTVTKYAAGD.

Transmembrane regions (helical) follow at residues 4–24, 35–55, 67–87, and 96–116; these read IIIL…FIML, LDIL…TALY, IIGT…YGSV, and AFLI…VAVL. Na(+) contacts are provided by glycine 74 and serine 77.

The protein belongs to the fluoride channel Fluc/FEX (TC 1.A.43) family.

Its subcellular location is the cell inner membrane. It carries out the reaction fluoride(in) = fluoride(out). Its activity is regulated as follows. Na(+) is not transported, but it plays an essential structural role and its presence is essential for fluoride channel function. Its function is as follows. Fluoride-specific ion channel. Important for reducing fluoride concentration in the cell, thus reducing its toxicity. This Brucella melitensis biotype 1 (strain ATCC 23456 / CCUG 17765 / NCTC 10094 / 16M) protein is Fluoride-specific ion channel FluC 2.